The following is a 422-amino-acid chain: Enolase (422 aa).

Q162 lines the (2R)-2-phosphoglycerate pocket. E204 functions as the Proton donor in the catalytic mechanism. Residues D241, E284, and D311 each contribute to the Mg(2+) site. 4 residues coordinate (2R)-2-phosphoglycerate: K336, R365, S366, and K387. K336 functions as the Proton acceptor in the catalytic mechanism.

Belongs to the enolase family. In terms of assembly, component of the RNA degradosome, a multiprotein complex involved in RNA processing and mRNA degradation. The cofactor is Mg(2+).

The protein localises to the cytoplasm. It is found in the secreted. It localises to the cell surface. The catalysed reaction is (2R)-2-phosphoglycerate = phosphoenolpyruvate + H2O. It functions in the pathway carbohydrate degradation; glycolysis; pyruvate from D-glyceraldehyde 3-phosphate: step 4/5. Functionally, catalyzes the reversible conversion of 2-phosphoglycerate (2-PG) into phosphoenolpyruvate (PEP). It is essential for the degradation of carbohydrates via glycolysis. In Legionella pneumophila (strain Paris), this protein is Enolase.